Here is a 250-residue protein sequence, read N- to C-terminus: MAAGTSNYWEDLRKQARQLENELDLKLVSFSKLCTSYSHSSARDGRRDRYSSDTTPLLNGSSQDRMFETMAIEIEQLLARLTGINDKMAEYTSSAGVPSLNAALMHTLQRHRDILQDYTHEFHKTKANFVAIRERENLMGSVRKDIESYKSGSGVNNRRTELFLKEHDHLRNSDRLIEETISIAMATKENMTSQRGMLKSIQSKMNTLANRFPAVNSLIQRINLRKRRDSLILGGVIGVCTILLLLYAFH.

At alanine 2 the chain carries N-acetylalanine. Topologically, residues 2 to 229 (AAGTSNYWED…QRINLRKRRD (228 aa)) are cytoplasmic. The stretch at 10 to 30 (EDLRKQARQLENELDLKLVSF) forms a coiled coil. Residues 39–59 (HSSARDGRRDRYSSDTTPLLN) are disordered. Positions 41-51 (SARDGRRDRYS) are enriched in basic and acidic residues. Positions 70-93 (MAIEIEQLLARLTGINDKMAEYTS) form a coiled coil. Serine 141 is subject to Phosphoserine. The chain crosses the membrane as a helical; Anchor for type IV membrane protein span at residues 230 to 250 (SLILGGVIGVCTILLLLYAFH).

The protein belongs to the GOSR1 family. In terms of assembly, component of several multiprotein Golgi SNARE complexes. Identified in a SNARE complex with BET1, STX5 and YKT6, in a SNARE complex with BET1L, STX5 and YKT6, in a SNARE complex with STX5, GOSR2, SEC22B and BET1, and in complex with STX5 and COG3. Interacts with GABARAPL2.

It is found in the golgi apparatus membrane. Its function is as follows. Involved in transport from the ER to the Golgi apparatus as well as in intra-Golgi transport. It belongs to a super-family of proteins called t-SNAREs or soluble NSF (N-ethylmaleimide-sensitive factor) attachment protein receptor. May play a protective role against hydrogen peroxide induced cytotoxicity under glutathione depleted conditions in neuronal cells by regulating the intracellular ROS levels via inhibition of p38 MAPK (MAPK11, MAPK12, MAPK13 and MAPK14). Participates in docking and fusion stage of ER to cis-Golgi transport. Plays an important physiological role in VLDL-transport vesicle-Golgi fusion and thus in VLDL delivery to the hepatic cis-Golgi. The sequence is that of Golgi SNAP receptor complex member 1 (GOSR1) from Bos taurus (Bovine).